A 150-amino-acid chain; its full sequence is uncharacterized protein (150 aa).

This is an uncharacterized protein from Methanocaldococcus jannaschii (strain ATCC 43067 / DSM 2661 / JAL-1 / JCM 10045 / NBRC 100440) (Methanococcus jannaschii).